The following is a 1405-amino-acid chain: DNA-directed RNA polymerase III subunit rpc1 (1405 aa).

Residues C66, C69, C76, H79, C106, C109, and C153 each contribute to the Zn(2+) site. Mg(2+)-binding residues include D493, D495, and D497. The bridging helix stretch occupies residues 838 to 850 (PTEFLFHAISGRE).

The protein belongs to the RNA polymerase beta' chain family. As to quaternary structure, component of the RNA polymerase III (Pol III) complex consisting of 17 subunits.

The protein localises to the nucleus. The catalysed reaction is RNA(n) + a ribonucleoside 5'-triphosphate = RNA(n+1) + diphosphate. DNA-dependent RNA polymerase catalyzes the transcription of DNA into RNA using the four ribonucleoside triphosphates as substrates. Largest and catalytic core component of RNA polymerase III which synthesizes small RNAs, such as 5S rRNA and tRNAs. Forms the polymerase active center together with the second largest subunit. A single-stranded DNA template strand of the promoter is positioned within the central active site cleft of Pol III. A bridging helix emanates from RPC1 and crosses the cleft near the catalytic site and is thought to promote translocation of Pol III by acting as a ratchet that moves the RNA-DNA hybrid through the active site by switching from straight to bent conformations at each step of nucleotide addition. The polypeptide is DNA-directed RNA polymerase III subunit rpc1 (rpc1) (Schizosaccharomyces pombe (strain 972 / ATCC 24843) (Fission yeast)).